Here is a 415-residue protein sequence, read N- to C-terminus: D-galactonate dehydratase family member RspA (415 aa).

Positions 48 and 133 each coordinate substrate. Y170 acts as the Proton donor/acceptor in catalysis. D223 serves as a coordination point for Mg(2+). H225 (proton donor/acceptor) is an active-site residue. Residues E249 and E275 each contribute to the Mg(2+) site. E275, R296, H325, D329, and E352 together coordinate substrate.

It belongs to the mandelate racemase/muconate lactonizing enzyme family. GalD subfamily. Mg(2+) is required as a cofactor.

It carries out the reaction D-mannonate = 2-dehydro-3-deoxy-D-gluconate + H2O. Has low D-mannonate dehydratase activity (in vitro), suggesting that this is not a physiological substrate and that it has no significant role in D-mannonate degradation in vivo. Has no detectable activity with a panel of 70 other acid sugars (in vitro). This is D-galactonate dehydratase family member RspA (rspA) from Escherichia coli (strain MS 21-1).